Consider the following 546-residue polypeptide: Chaperonin GroEL (546 aa).

ATP-binding positions include 30–33 (TLGP), Lys-51, 87–91 (DGTTT), Gly-415, 479–481 (NAA), and Asp-495. The tract at residues 526–546 (KEEKPDLSGAGAGMGGMGGMM) is disordered. Positions 535-546 (AGAGMGGMGGMM) are enriched in gly residues.

The protein belongs to the chaperonin (HSP60) family. Forms a cylinder of 14 subunits composed of two heptameric rings stacked back-to-back. Interacts with the co-chaperonin GroES.

It localises to the cytoplasm. It carries out the reaction ATP + H2O + a folded polypeptide = ADP + phosphate + an unfolded polypeptide.. Its function is as follows. Together with its co-chaperonin GroES, plays an essential role in assisting protein folding. The GroEL-GroES system forms a nano-cage that allows encapsulation of the non-native substrate proteins and provides a physical environment optimized to promote and accelerate protein folding. In Wigglesworthia glossinidia brevipalpis, this protein is Chaperonin GroEL.